We begin with the raw amino-acid sequence, 77 residues long: Large ribosomal subunit protein eL14 (77 aa).

Belongs to the eukaryotic ribosomal protein eL14 family.

In Methanococcus maripaludis (strain C6 / ATCC BAA-1332), this protein is Large ribosomal subunit protein eL14.